The following is a 325-amino-acid chain: MAMAVFRREGRRLLPSIAARPIAAIRSPLSSDQEEGLLGVRSISTQVVRNRMKSVKNIQKITKAMKMVAASKLRAVQGRAENSRGLWQPFTALLGDNPSIDVKKSVVVTLSSDKGLCGGINSTVVKVSRALYKLNAGPEKEVQFVIVGEKAKAIMFRDSKNDIVLSVTELNKNPLNYAQVSVLADDILKNVEFDALRIVYNKFHSVVAFLPTVSTVLSPEIIEKESEIGGKLGELDSYEIEGGETKGEILQNLAEFQFSCVMFNAVLENACSEMGARMSAMDSSSRNAGEMLDRLTLTYNRTRQASITTELIEIISGASALEAAK.

Residues 1 to 42 constitute a mitochondrion transit peptide; that stretch reads MAMAVFRREGRRLLPSIAARPIAAIRSPLSSDQEEGLLGVRS.

Belongs to the ATPase gamma chain family. As to quaternary structure, F-type ATPases have 2 components, CF(1) - the catalytic core - and CF(0) - the membrane proton channel. CF(1) has five subunits: alpha(3), beta(3), gamma(1), delta(1), epsilon(1). CF(0) has three main subunits: a, b and c.

Its subcellular location is the mitochondrion. It localises to the mitochondrion inner membrane. Functionally, mitochondrial membrane ATP synthase (F(1)F(0) ATP synthase or Complex V) produces ATP from ADP in the presence of a proton gradient across the membrane which is generated by electron transport complexes of the respiratory chain. F-type ATPases consist of two structural domains, F(1) - containing the extramembraneous catalytic core, and F(0) - containing the membrane proton channel, linked together by a central stalk and a peripheral stalk. During catalysis, ATP synthesis in the catalytic domain of F(1) is coupled via a rotary mechanism of the central stalk subunits to proton translocation. Part of the complex F(1) domain and the central stalk which is part of the complex rotary element. The gamma subunit protrudes into the catalytic domain formed of alpha(3)beta(3). Rotation of the central stalk against the surrounding alpha(3)beta(3) subunits leads to hydrolysis of ATP in three separate catalytic sites on the beta subunits. The protein is ATP synthase subunit gamma, mitochondrial (ATPC) of Arabidopsis thaliana (Mouse-ear cress).